A 540-amino-acid chain; its full sequence is Cytosolic carboxypeptidase 6 (540 aa).

Positions 167 to 438 (YPYTYTRFQH…NVARTFLDYY (272 aa)) constitute a Peptidase M14 domain. Zn(2+) contacts are provided by histidine 230, glutamate 233, and histidine 328. Glutamate 401 (proton donor/acceptor) is an active-site residue.

The protein belongs to the peptidase M14 family. As to quaternary structure, interacts with MYLK. The cofactor is Zn(2+). In terms of tissue distribution, widely expressed. Expressed abundantly in testis, pituitary and brain and to a lower extent in eye, stomach, adrenal and kidney. In brain, expressed at low level in cerebellum as compared to cortex.

The protein resides in the cytoplasm. It is found in the cytosol. It localises to the cytoskeleton. Its subcellular location is the microtubule organizing center. The protein localises to the centrosome. The protein resides in the centriole. It is found in the golgi apparatus. It localises to the cilium basal body. It carries out the reaction (L-glutamyl)(n+1)-gamma-L-glutamyl-L-glutamyl-[protein] + H2O = (L-glutamyl)(n)-gamma-L-glutamyl-L-glutamyl-[protein] + L-glutamate. The enzyme catalyses C-terminal L-alpha-aminoacyl-L-glutamyl-L-glutamyl-[tubulin] + H2O = C-terminal L-alpha-aminoacyl-L-glutamyl-[tubulin] + L-glutamate. Functionally, metallocarboxypeptidase that mediates protein deglutamylation of tubulin and non-tubulin target proteins. Catalyzes the removal of polyglutamate side chains present on the gamma-carboxyl group of glutamate residues within the C-terminal tail of tubulin protein. Specifically cleaves tubulin long-side-chains, while it is not able to remove the branching point glutamate. Also catalyzes the removal of polyglutamate residues from the carboxy-terminus of non-tubulin proteins such as MYLK. Mediates the deglutamylation of nucleotidyltransferase CGAS, leading to CGAS antiviral defense response activation. Involved in KLF4 deglutamylation which promotes KLF4 proteasome-mediated degradation, thereby negatively regulating cell pluripotency maintenance and embryogenesis. This chain is Cytosolic carboxypeptidase 6, found in Mus musculus (Mouse).